The following is a 1006-amino-acid chain: DNA polymerase (1006 aa).

It belongs to the DNA polymerase type-B family. As to quaternary structure, interacts with OPG148. Component of the Uracil-DNA glycosylase(UDG)-OPG148-polymerase complex; OPG148 and OPG116/UDG form a heterodimeric processivity factor that associates with OPG071 to form the processive polymerase holoenzyme.

It catalyses the reaction DNA(n) + a 2'-deoxyribonucleoside 5'-triphosphate = DNA(n+1) + diphosphate. Its function is as follows. Catalyzes DNA synthesis. Acquires processivity by associating with a heterodimeric processivity factor comprised of the viral OPG148 and OPG116 proteins, thereby forming the DNA polymerase holoenzyme. Displays 3'- to 5' exonuclease activity. Might participate in viral DNA recombination. Does not perform OPG116/D4synthesis across an abasic site. The sequence is that of DNA polymerase (OPG071) from Homo sapiens (Human).